The sequence spans 805 residues: Ubiquitin carboxyl-terminal hydrolase 10 (805 aa).

The interval 139 to 170 (DGSGNADSDGTSGTGQRERKKKKKRPPGYYSY) is disordered. Residues 143–153 (NADSDGTSGTG) show a composition bias toward polar residues. In terms of domain architecture, USP spans 422-802 (RGLINKGNWC…TAYLLYYRRV (381 aa)). The active-site Nucleophile is the Cys431. The segment at 561-593 (HINNGPDPVSEKEEINKDEQEGSDEEWEQVGPR) is disordered. Over residues 569-580 (VSEKEEINKDEQ) the composition is skewed to basic and acidic residues. The active-site Proton acceptor is the His756.

This sequence belongs to the peptidase C19 family. USP10 subfamily.

Its subcellular location is the cytoplasm. The protein resides in the nucleus. The enzyme catalyses Thiol-dependent hydrolysis of ester, thioester, amide, peptide and isopeptide bonds formed by the C-terminal Gly of ubiquitin (a 76-residue protein attached to proteins as an intracellular targeting signal).. Hydrolase that can remove conjugated ubiquitin from target proteins such as p53/tp53, rps2/us5, rps3/us3, rps10/eS10, becn1, snx3 and cftr. Acts as an essential regulator of p53/tp53 stability: in unstressed cells, specifically deubiquitinates p53/tp53 in the cytoplasm, leading to counteracts MDM2 action and stabilize p53/tp53. Following DNA damage, translocates to the nucleus and deubiquitinates p53/tp53, leading to regulate the p53/TP53-dependent DNA damage response. Component of a regulatory loop that controls autophagy and p53/tp53 levels. Plays a key role in 40S ribosome subunit recycling when a ribosome has stalled during translation: acts both by inhibiting formation of stress granules, which store stalled translation pre-initiation complexes, and mediating deubiquitination of 40S ribosome subunits. Deubiquitinates cftr in early endosomes, enhancing its endocytic recycling. In Xenopus tropicalis (Western clawed frog), this protein is Ubiquitin carboxyl-terminal hydrolase 10 (usp10).